A 356-amino-acid polypeptide reads, in one-letter code: UDP-N-acetylglucosamine--N-acetylmuramyl-(pentapeptide) pyrophosphoryl-undecaprenol N-acetylglucosamine transferase (356 aa).

UDP-N-acetyl-alpha-D-glucosamine contacts are provided by residues 12 to 14 (TGG), Asn-124, Arg-163, Ser-188, Ile-242, and Gln-287.

The protein belongs to the glycosyltransferase 28 family. MurG subfamily.

It is found in the cell inner membrane. The catalysed reaction is di-trans,octa-cis-undecaprenyl diphospho-N-acetyl-alpha-D-muramoyl-L-alanyl-D-glutamyl-meso-2,6-diaminopimeloyl-D-alanyl-D-alanine + UDP-N-acetyl-alpha-D-glucosamine = di-trans,octa-cis-undecaprenyl diphospho-[N-acetyl-alpha-D-glucosaminyl-(1-&gt;4)]-N-acetyl-alpha-D-muramoyl-L-alanyl-D-glutamyl-meso-2,6-diaminopimeloyl-D-alanyl-D-alanine + UDP + H(+). It functions in the pathway cell wall biogenesis; peptidoglycan biosynthesis. In terms of biological role, cell wall formation. Catalyzes the transfer of a GlcNAc subunit on undecaprenyl-pyrophosphoryl-MurNAc-pentapeptide (lipid intermediate I) to form undecaprenyl-pyrophosphoryl-MurNAc-(pentapeptide)GlcNAc (lipid intermediate II). In Pseudomonas savastanoi pv. phaseolicola (strain 1448A / Race 6) (Pseudomonas syringae pv. phaseolicola (strain 1448A / Race 6)), this protein is UDP-N-acetylglucosamine--N-acetylmuramyl-(pentapeptide) pyrophosphoryl-undecaprenol N-acetylglucosamine transferase.